The chain runs to 334 residues: Malate dehydrogenase 2 (334 aa).

19 to 25 lines the NAD(+) pocket; sequence IGAGKVG. R100 and R106 together coordinate substrate. Residues N113 and 136 to 138 contribute to the NAD(+) site; that span reads VSN. Positions 138 and 169 each coordinate substrate. The active-site Proton acceptor is the H193.

The protein belongs to the LDH/MDH superfamily.

The enzyme catalyses (S)-malate + NAD(+) = oxaloacetate + NADH + H(+). Catalyzes the reversible oxidation of malate to oxaloacetate. The polypeptide is Malate dehydrogenase 2 (Aquifex aeolicus (strain VF5)).